The primary structure comprises 575 residues: Probable lysosomal cobalamin transporter (575 aa).

The next 5 membrane-spanning stretches (helical) occupy residues 8-28 (LIWV…SVFI), 46-66 (IVAI…VALV), 95-115 (LVYY…VPFV), 144-164 (YTLS…FVPI), and 188-208 (ALTF…ALHT). A glycan (N-linked (GlcNAc...) asparagine) is linked at asparagine 233. 4 helical membrane-spanning segments follow: residues 314-334 (LVGL…ILTA), 376-396 (AIFT…IATV), 420-440 (VMTA…SMIV), and 504-524 (FGAI…LALI). Positions 537–549 (QLDEDAEEAEEEA) are enriched in acidic residues. Residues 537–556 (QLDEDAEEAEEEALLSGSRR) are disordered.

Belongs to the LIMR family. LMBRD1 subfamily.

It is found in the lysosome membrane. Functionally, probable lysosomal cobalamin transporter. Required to export cobalamin from lysosomes allowing its conversion to cofactors. The chain is Probable lysosomal cobalamin transporter from Emericella nidulans (strain FGSC A4 / ATCC 38163 / CBS 112.46 / NRRL 194 / M139) (Aspergillus nidulans).